An 887-amino-acid polypeptide reads, in one-letter code: MEAFSVRFESASSIEERKEQTRNARAEVLRQAKHNFEKEQRGEERKRLRDEDTWMLPDVHERIEQFSQEHSEKKKKKKDKHSKKVKKEKKKKRKKQKCQKQSESTDSSASSEDEWVEAAPSQISDKEKTWKVKDKRTEEECDSHDIQRDEWMTIDFMSIKTVSSSSLKAEKETLRQIEREKTQVLEQSKLLERELNPYWKDGGTGLPSKTCILPVTKAKGVEDGGLSWLRKSCQRMKEQAQKENRNFEDIVAEKYGSMEIFQSKLKEAEKIAYKKEDCGWERWRKPTYSDRAQCSQASGTSDLVKCKNLSEDRHLEMEPANSSNYKFSGPDTGKRSGTLQTCRRESALRKNQDSSGNLRSKFLRPSDEDELSFHKRKNFESSSSYSPLVAQASLHCDFRKLTENSEESSASCSRSDRRQENRKPSDKKPLETWSYNANQHSTGGRREQLQAESMSCDPPGRGLQQDMTLTIAGPEAESTYILNVDEKNKLGAKIIKAEMMGNMELAEQLKAQLKEANKFKETQMPAKRLGVEHEDEQEVILIQTDKSGRMWPVSSPRETLDMKAERRKRKRVSTHEDKERVRYFPDDDHLSLKDLVKNEKIGTDINQNRLFMKMASKFMGKSDEDNYTLDDMFVSKAAEKEHLGKKEESQRRRAIAEHQSLAAKMAKCLYCFDSSQFPKHLIVAIGVKVYLCLPSFQSLTEGHCFIVPLQHHQAATVLDEDVWEEIQMFRKSLVKMFEDKELDCIFLETNMGLKKHYHMVYECIPLPKEVGDMAPIYFKKAIMESDEEWSMNKKLIDLSSKDIRKSVPRGLPYFAVDFGLQGGFAHIIEDQYRFPHYFGKEIIGGMLDLEPRLWRKGIRESFEDQRKKSLQFAQWWKPYDITKSKSS.

The disordered stretch occupies residues 1–143 (MEAFSVRFES…DKRTEEECDS (143 aa)). Residues 11–103 (ASSIEERKEQ…KKQKCQKQSE (93 aa)) are a coiled coil. Residues 14–72 (IEERKEQTRNARAEVLRQAKHNFEKEQRGEERKRLRDEDTWMLPDVHERIEQFSQEHSE) show a composition bias toward basic and acidic residues. A Phosphoserine modification is found at Ser71. The segment covering 73-98 (KKKKKKDKHSKKVKKEKKKKRKKQKC) has biased composition (basic residues). Low complexity predominate over residues 99 to 110 (QKQSESTDSSAS). The span at 124 to 143 (SDKEKTWKVKDKRTEEECDS) shows a compositional bias: basic and acidic residues. Positions 164–254 (SSSLKAEKET…RNFEDIVAEK (91 aa)) form a coiled coil. A Glycyl lysine isopeptide (Lys-Gly) (interchain with G-Cter in SUMO2) cross-link involves residue Lys168. Disordered stretches follow at residues 315–370 (LEME…DEDE) and 405–447 (SEES…GRRE). A compositionally biased stretch (basic and acidic residues) spans 342–352 (CRRESALRKNQ). Phosphoserine occurs at positions 354 and 366. Positions 414–430 (RSDRRQENRKPSDKKPL) are enriched in basic and acidic residues. The span at 433 to 442 (WSYNANQHST) shows a compositional bias: polar residues. Ser478 is modified (phosphoserine). Residues 495-524 (IKAEMMGNMELAEQLKAQLKEANKFKETQM) are a coiled coil. Residue Lys597 forms a Glycyl lysine isopeptide (Lys-Gly) (interchain with G-Cter in SUMO2) linkage. Ser622 is subject to Phosphoserine.

This sequence belongs to the CWF19 family.

This chain is CWF19-like protein 2 (Cwf19l2), found in Mus musculus (Mouse).